Reading from the N-terminus, the 457-residue chain is Mesentericin Y105 secretion protein MesE (457 aa).

Residues 22–42 (TLIIVPIFLLVVFIVLFSLFA) form a helical membrane-spanning segment.

Belongs to the membrane fusion protein (MFP) (TC 8.A.1) family.

It localises to the membrane. Its function is as follows. Involved in the secretion of mesentericin Y105. This is Mesentericin Y105 secretion protein MesE (mesE) from Leuconostoc mesenteroides.